A 211-amino-acid chain; its full sequence is Small ribosomal subunit protein eS8 (211 aa).

The protein belongs to the eukaryotic ribosomal protein eS8 family.

The sequence is that of Small ribosomal subunit protein eS8 (rps8) from Dictyostelium discoideum (Social amoeba).